Here is a 354-residue protein sequence, read N- to C-terminus: Holliday junction branch migration complex subunit RuvB (354 aa).

Positions 1 to 38 (MSDFERTEFELPPGVGHSQNEDLNPQQTAGDSDIDTSL) are disordered. The large ATPase domain (RuvB-L) stretch occupies residues 2–199 (SDFERTEFEL…FGFTAQMEFY (198 aa)). Residues 17–30 (HSQNEDLNPQQTAG) show a composition bias toward polar residues. Residues leucine 38, arginine 39, glycine 80, lysine 83, threonine 84, threonine 85, 146-148 (EDF), arginine 189, tyrosine 199, and arginine 236 each bind ATP. Threonine 84 contributes to the Mg(2+) binding site. Residues 200–270 (DTADLTRVVT…VARAALLVFD (71 aa)) are small ATPAse domain (RuvB-S). The tract at residues 273 to 354 (ESGLDRLDRA…LEPPEGTIGL (82 aa)) is head domain (RuvB-H). Positions 328 and 333 each coordinate DNA.

The protein belongs to the RuvB family. As to quaternary structure, homohexamer. Forms an RuvA(8)-RuvB(12)-Holliday junction (HJ) complex. HJ DNA is sandwiched between 2 RuvA tetramers; dsDNA enters through RuvA and exits via RuvB. An RuvB hexamer assembles on each DNA strand where it exits the tetramer. Each RuvB hexamer is contacted by two RuvA subunits (via domain III) on 2 adjacent RuvB subunits; this complex drives branch migration. In the full resolvosome a probable DNA-RuvA(4)-RuvB(12)-RuvC(2) complex forms which resolves the HJ.

It is found in the cytoplasm. The catalysed reaction is ATP + H2O = ADP + phosphate + H(+). Functionally, the RuvA-RuvB-RuvC complex processes Holliday junction (HJ) DNA during genetic recombination and DNA repair, while the RuvA-RuvB complex plays an important role in the rescue of blocked DNA replication forks via replication fork reversal (RFR). RuvA specifically binds to HJ cruciform DNA, conferring on it an open structure. The RuvB hexamer acts as an ATP-dependent pump, pulling dsDNA into and through the RuvAB complex. RuvB forms 2 homohexamers on either side of HJ DNA bound by 1 or 2 RuvA tetramers; 4 subunits per hexamer contact DNA at a time. Coordinated motions by a converter formed by DNA-disengaged RuvB subunits stimulates ATP hydrolysis and nucleotide exchange. Immobilization of the converter enables RuvB to convert the ATP-contained energy into a lever motion, pulling 2 nucleotides of DNA out of the RuvA tetramer per ATP hydrolyzed, thus driving DNA branch migration. The RuvB motors rotate together with the DNA substrate, which together with the progressing nucleotide cycle form the mechanistic basis for DNA recombination by continuous HJ branch migration. Branch migration allows RuvC to scan DNA until it finds its consensus sequence, where it cleaves and resolves cruciform DNA. In Corynebacterium jeikeium (strain K411), this protein is Holliday junction branch migration complex subunit RuvB.